The sequence spans 73 residues: Large ribosomal subunit protein bL31 (73 aa).

The Zn(2+) site is built by cysteine 16, cysteine 18, cysteine 36, and cysteine 39.

Belongs to the bacterial ribosomal protein bL31 family. Type A subfamily. In terms of assembly, part of the 50S ribosomal subunit. Zn(2+) serves as cofactor.

In terms of biological role, binds the 23S rRNA. This chain is Large ribosomal subunit protein bL31, found in Desulfosudis oleivorans (strain DSM 6200 / JCM 39069 / Hxd3) (Desulfococcus oleovorans).